A 628-amino-acid chain; its full sequence is EIN3-binding F-box protein 1 (628 aa).

Residues 61–109 (PVSIDVLPDECLFEIFRRLSGPQERSACAFVSKQWLTLVSSIRQKEIDV) form the F-box domain.

As to quaternary structure, part of a SCF (SKP1-cullin-F-box) protein ligase complex. Interacts with CUL1, SKP1A/ASK1, SKP1B/ASK2, ASK11, ASK12, ASK13, ASK18, EIN3, and EIL1. Ubiquitous.

Its subcellular location is the nucleus. It participates in protein modification; protein ubiquitination. Its function is as follows. Component of SCF(EBF1) E3 ubiquitin ligase complexes, which may mediate the ubiquitination and subsequent proteasomal degradation of target proteins (probably including EIN3 and EIL1). Regulator of the ethylene signaling cascade by modulating the stability of EIN3 and EIL1 proteins. Confers insensitivity to ethylene. This is EIN3-binding F-box protein 1 (EBF1) from Arabidopsis thaliana (Mouse-ear cress).